The sequence spans 297 residues: Bifunctional protein FolD 1 (297 aa).

NADP(+) is bound by residues 164 to 166 (GRS) and T230.

The protein belongs to the tetrahydrofolate dehydrogenase/cyclohydrolase family. As to quaternary structure, homodimer.

It catalyses the reaction (6R)-5,10-methylene-5,6,7,8-tetrahydrofolate + NADP(+) = (6R)-5,10-methenyltetrahydrofolate + NADPH. The catalysed reaction is (6R)-5,10-methenyltetrahydrofolate + H2O = (6R)-10-formyltetrahydrofolate + H(+). It participates in one-carbon metabolism; tetrahydrofolate interconversion. Catalyzes the oxidation of 5,10-methylenetetrahydrofolate to 5,10-methenyltetrahydrofolate and then the hydrolysis of 5,10-methenyltetrahydrofolate to 10-formyltetrahydrofolate. The sequence is that of Bifunctional protein FolD 1 from Rhodococcus jostii (strain RHA1).